The sequence spans 307 residues: Cysteine synthase (307 aa).

Lysine 42 carries the N6-(pyridoxal phosphate)lysine modification. Residues asparagine 72, 176–180 (GTGGH), and serine 263 contribute to the pyridoxal 5'-phosphate site.

The protein belongs to the cysteine synthase/cystathionine beta-synthase family. The cofactor is pyridoxal 5'-phosphate.

It carries out the reaction O-acetyl-L-serine + hydrogen sulfide = L-cysteine + acetate. Its pathway is amino-acid biosynthesis; L-cysteine biosynthesis; L-cysteine from L-serine: step 2/2. The chain is Cysteine synthase (cysK) from Flavobacterium sp. (strain K3-15 / DSM ID92-509).